The chain runs to 213 residues: Putative cytochrome c-type biogenesis protein HI_1454 (213 aa).

The next 6 membrane-spanning stretches (helical) occupy residues 15-35 (GLAS…FGIL), 46-66 (FLFI…FGFL), 77-97 (IIAG…FKIG), 118-138 (AFVL…PILA), 154-174 (ASMM…FSFF), and 192-212 (FKIG…TNNF).

This sequence belongs to the DsbD family.

The protein localises to the cell membrane. In terms of biological role, could be involved in cytochrome c synthesis. This chain is Putative cytochrome c-type biogenesis protein HI_1454, found in Haemophilus influenzae (strain ATCC 51907 / DSM 11121 / KW20 / Rd).